Reading from the N-terminus, the 173-residue chain is MATGPRYKVAFRRRREGRTDYHQRLRLLLSREDRVVVRKSARHMQIQLVAPDANGDVTLSSAISKELAKYGYEGSTGNTTAAYLTGLLFGYKTLAEGYESGVLDIGIQASSAGSRVYAALKGVVDSGLDVPHNSSVFPSDERIRGEHVAEYMEGSNLPEVFDAVKEKILAEFS.

Belongs to the universal ribosomal protein uL18 family. As to quaternary structure, part of the 50S ribosomal subunit. Contacts the 5S and 23S rRNAs.

In terms of biological role, this is one of the proteins that bind and probably mediate the attachment of the 5S RNA into the large ribosomal subunit, where it forms part of the central protuberance. This chain is Large ribosomal subunit protein uL18, found in Methanococcoides burtonii (strain DSM 6242 / NBRC 107633 / OCM 468 / ACE-M).